The chain runs to 606 residues: Vacuolar calcium ion transporter (606 aa).

Residues Met-1–Met-110 are disordered. Topologically, residues Met-1–Ala-137 are cytoplasmic. Over residues Pro-18–Leu-30 the composition is skewed to low complexity. The segment covering Gln-36 to Ser-56 has biased composition (polar residues). The chain crosses the membrane as a helical span at residues Ile-138–Leu-158. Over Ala-159–Asp-170 the chain is Vacuolar. Residues Thr-171 to Ala-191 traverse the membrane as a helical segment. Over Thr-192–Gly-204 the chain is Cytoplasmic. Residues Gly-205–Ile-225 traverse the membrane as a helical segment. Over Lys-226 to Leu-236 the chain is Vacuolar. The helical transmembrane segment at Val-237–Val-257 threads the bilayer. Topologically, residues Arg-258–Asn-272 are cytoplasmic. The chain crosses the membrane as a helical span at residues Ala-273–Ile-293. At Ser-294–Leu-313 the chain is on the vacuolar side. A helical transmembrane segment spans residues Leu-314–Phe-334. Residues Gln-335–Asn-437 are Cytoplasmic-facing. The interval Asp-376 to Pro-434 is disordered. Residues Glu-423–Thr-433 show a composition bias toward acidic residues. Residues Val-438 to Phe-458 traverse the membrane as a helical segment. At Leu-459–Trp-477 the chain is on the vacuolar side. The helical transmembrane segment at Val-478–Val-498 threads the bilayer. Residues Ser-499–Asp-505 lie on the Cytoplasmic side of the membrane. Residues Leu-506–Ile-526 form a helical membrane-spanning segment. At Glu-527–Lys-535 the chain is on the vacuolar side. Residues Pro-536 to Val-556 form a helical membrane-spanning segment. Residues Asn-557 to Asn-566 lie on the Cytoplasmic side of the membrane. The helical transmembrane segment at Trp-567–Tyr-587 threads the bilayer. Topologically, residues Pro-588 to Gly-606 are vacuolar.

It belongs to the Ca(2+):cation antiporter (CaCA) (TC 2.A.19) family.

It localises to the vacuole membrane. Functionally, has a role in promoting intracellular calcium ion sequestration via the exchange of calcium ions for hydrogen ions across the vacuolar membrane. The polypeptide is Vacuolar calcium ion transporter (Cryptococcus neoformans var. grubii serotype A (strain H99 / ATCC 208821 / CBS 10515 / FGSC 9487) (Filobasidiella neoformans var. grubii)).